The sequence spans 460 residues: GTPase Der (460 aa).

EngA-type G domains follow at residues K2–I164 and I199–T370. GTP is bound by residues G8–S15, D55–L59, N116–D119, G205–S212, D252–I256, and N316–D319. The KH-like domain occupies Q371–G454.

This sequence belongs to the TRAFAC class TrmE-Era-EngA-EngB-Septin-like GTPase superfamily. EngA (Der) GTPase family. Associates with the 50S ribosomal subunit.

In terms of biological role, GTPase that plays an essential role in the late steps of ribosome biogenesis. The protein is GTPase Der of Campylobacter hominis (strain ATCC BAA-381 / DSM 21671 / CCUG 45161 / LMG 19568 / NCTC 13146 / CH001A).